Here is a 330-residue protein sequence, read N- to C-terminus: Laforin (330 aa).

Residues Met1–Leu123 enclose the CBM20 domain. Position 25 is a phosphoserine; by AMPK (Ser25). Residues Trp32, Lys86, Gly102–Asp106, Asp196, Asp234, and Arg240 each bind substrate. Positions His155 to Lys322 constitute a Tyrosine-protein phosphatase domain. Cys265 serves as the catalytic Phosphocysteine intermediate. A Glucan phosphatase signature motif CXAGXGR motif is present at residues Cys265–Arg271. Residues Asn266–Arg271 and Tyr303 each bind substrate.

The protein belongs to the protein-tyrosine phosphatase family. Homodimer. Interacts with PPP1R3B, PPP1R3C, HIRIP5, and EPM2AIP1. Binds glycogen and Lafora bodies. Interacts with NHLRC1/malin (via the NHL repeats). Forms a complex with NHLRC1/malin and HSP70. Interacts with PPP1R3D; in the presence of NHLC1/malin the interaction leads to ubiquitination and autophagic degradation of PPP1R3D. Interacts (via the phosphatase domain) with MAPT/Tau; the interaction dephosphorylates MAPT. Interacts with PRDM8. In terms of processing, polyubiquitinated by NHLRC1/malin. Phosphorylation on Ser-25 by AMPK affects the phosphatase activity of the enzyme and its ability to homodimerize and interact with NHLRC1, PPP1R3C or PRKAA2. As to expression, detected in skeletal muscle and in brain (at protein level). Widely expressed. Higher levels of expression are found in heart, brain, liver, skeletal muscle and kidney.

It is found in the cytoplasm. The protein localises to the endoplasmic reticulum membrane. The protein resides in the cell membrane. The catalysed reaction is O-phospho-L-tyrosyl-[protein] + H2O = L-tyrosyl-[protein] + phosphate. The enzyme catalyses O-phospho-L-seryl-[protein] + H2O = L-seryl-[protein] + phosphate. It carries out the reaction O-phospho-L-threonyl-[protein] + H2O = L-threonyl-[protein] + phosphate. Plays an important role in preventing glycogen hyperphosphorylation and the formation of insoluble aggregates, via its activity as glycogen phosphatase, and by promoting the ubiquitination of proteins involved in glycogen metabolism via its interaction with the E3 ubiquitin ligase NHLRC1/malin. Dephosphorylates phosphotyrosine and synthetic substrates, such as para-nitrophenylphosphate (pNPP), and has low activity with phosphoserine and phosphothreonine substrates (in vitro). Has also been shown to dephosphorylate MAPT. Shows strong phosphatase activity towards complex carbohydrates in vitro, avoiding glycogen hyperphosphorylation which is associated with reduced branching and formation of insoluble aggregates. Forms a complex with NHLRC1/malin and HSP70, which suppresses the cellular toxicity of misfolded proteins by promoting their degradation through the ubiquitin-proteasome system (UPS). Acts as a scaffold protein to facilitate PPP1R3C/PTG ubiquitination by NHLRC1/malin. Also promotes proteasome-independent protein degradation through the macroautophagy pathway. In Mus musculus (Mouse), this protein is Laforin (Epm2a).